The sequence spans 220 residues: Adenylate kinase (220 aa).

10 to 15 (GAGKGT) is an ATP binding site. The segment at 30–59 (STGDMLRAAVKAGSPLGVEAKGYMDAGKLV) is NMP. Residues threonine 31, arginine 36, 57 to 59 (KLV), 85 to 88 (GFPR), and glutamine 92 contribute to the AMP site. Positions 122–150 (GRRTHPASGRTYHVKFNPPKVEGKDDVTG) are disordered. The tract at residues 122-159 (GRRTHPASGRTYHVKFNPPKVEGKDDVTGEPLIQRDDD) is LID. ATP contacts are provided by residues arginine 123 and 132-133 (TY). AMP-binding residues include arginine 156 and arginine 167. Glycine 206 contributes to the ATP binding site.

It belongs to the adenylate kinase family. As to quaternary structure, monomer.

It is found in the cytoplasm. It carries out the reaction AMP + ATP = 2 ADP. It functions in the pathway purine metabolism; AMP biosynthesis via salvage pathway; AMP from ADP: step 1/1. In terms of biological role, catalyzes the reversible transfer of the terminal phosphate group between ATP and AMP. Plays an important role in cellular energy homeostasis and in adenine nucleotide metabolism. The protein is Adenylate kinase of Burkholderia ambifaria (strain MC40-6).